A 2512-amino-acid polypeptide reads, in one-letter code: Fatty acid synthase (2512 aa).

Glu-2 bears the N-acetylglutamate mark. A Ketosynthase family 3 (KS3) domain is found at 2-406 (EDVVIAGIAG…GSNAHVILRP (405 aa)). Active-site for beta-ketoacyl synthase activity residues include Cys-161, His-293, and His-331. The tract at residues 427 to 815 (GRTQEAVEIL…GINVLGNNLF (389 aa)) is acyl and malonyl transferases. Ser-580 (for acyl/malonyl transferase activity) is an active-site residue. Residues 646–647 (DT), Phe-670, and Arg-772 each bind an acyl-CoA. An N-terminal hotdog fold region spans residues 844-967 (PKAEDFPSGS…ISLLENDALK (124 aa)). The region spanning 844–1111 (PKAEDFPSGS…ASVAPRRQQE (268 aa)) is the PKS/mFAS DH domain. His-878 acts as the Proton acceptor; for dehydratase activity in catalysis. The interval 984–1111 (AKSGLLMEDV…ASVAPRRQQE (128 aa)) is C-terminal hotdog fold. Asp-1034 functions as the Proton donor; for dehydratase activity in the catalytic mechanism. Position 1475 is an S-nitrosocysteine (Cys-1475). The interval 1638-1866 (WEVPENWTLE…MIKIQEEEKQ (229 aa)) is enoyl reductase. 1675-1692 (VLIHSGSGGVGQAAIAIA) is a binding site for NADP(+). Lys-1708 carries the N6-(pyridoxal phosphate)lysine modification. The beta-ketoacyl reductase stretch occupies residues 1867–2119 (YPLRSEPVKL…SFVLAEKVSV (253 aa)). 1889-1904 (SYIITGGLGGFGLELA) provides a ligand contact to NADP(+). The residue at position 2093 (Cys-2093) is an S-nitrosocysteine. The region spanning 2120 to 2200 (KSEGGSQRDL…ELSSKTGTAE (81 aa)) is the Carrier domain. Ser-2158 is modified (O-(pantetheine 4'-phosphoryl)serine). A thioesterase region spans residues 2209-2511 (KTGPGEPPKL…LAEPRVSVRE (303 aa)). Residues Ser-2309 and His-2482 each act as for thioesterase activity in the active site.

As to quaternary structure, homodimer which is arranged in a head to tail fashion. In terms of processing, S-nitrosylation of Fatty acid synthase at cysteine residues Cys-1475 or Cys-2093 is important for the enzyme dimerization. In adipocytes, S-nitrosylation of Fatty acid synthase occurs under physiological conditions and gradually increases during adipogenesis.

The catalysed reaction is acetyl-CoA + n malonyl-CoA + 2n NADPH + 2n H(+) = a long-chain fatty acid + (n+1) CoA + n CO2 + 2n NADP(+).. It carries out the reaction holo-[ACP] + acetyl-CoA = acetyl-[ACP] + CoA. It catalyses the reaction holo-[ACP] + malonyl-CoA = malonyl-[ACP] + CoA. The enzyme catalyses a fatty acyl-[ACP] + malonyl-[ACP] + H(+) = a 3-oxoacyl-[ACP] + holo-[ACP] + CO2. The catalysed reaction is a (3R)-hydroxyacyl-[ACP] + NADP(+) = a 3-oxoacyl-[ACP] + NADPH + H(+). It carries out the reaction a (3R)-hydroxyacyl-[ACP] = a (2E)-enoyl-[ACP] + H2O. It catalyses the reaction a 2,3-saturated acyl-[ACP] + NADP(+) = a (2E)-enoyl-[ACP] + NADPH + H(+). The enzyme catalyses hexadecanoyl-[ACP] + H2O = hexadecanoate + holo-[ACP] + H(+). The catalysed reaction is acetyl-[ACP] + malonyl-[ACP] + H(+) = 3-oxobutanoyl-[ACP] + holo-[ACP] + CO2. It carries out the reaction 3-oxobutanoyl-[ACP] + NADPH + H(+) = (3R)-hydroxybutanoyl-[ACP] + NADP(+). It catalyses the reaction (3R)-hydroxybutanoyl-[ACP] = (2E)-butenoyl-[ACP] + H2O. The enzyme catalyses (2E)-butenoyl-[ACP] + NADPH + H(+) = butanoyl-[ACP] + NADP(+). The catalysed reaction is butanoyl-[ACP] + malonyl-[ACP] + H(+) = 3-oxohexanoyl-[ACP] + holo-[ACP] + CO2. It carries out the reaction 3-oxohexanoyl-[ACP] + NADPH + H(+) = (3R)-hydroxyhexanoyl-[ACP] + NADP(+). It catalyses the reaction (3R)-hydroxyhexanoyl-[ACP] = (2E)-hexenoyl-[ACP] + H2O. The enzyme catalyses (2E)-hexenoyl-[ACP] + NADPH + H(+) = hexanoyl-[ACP] + NADP(+). The catalysed reaction is hexanoyl-[ACP] + malonyl-[ACP] + H(+) = 3-oxooctanoyl-[ACP] + holo-[ACP] + CO2. It carries out the reaction 3-oxooctanoyl-[ACP] + NADPH + H(+) = (3R)-hydroxyoctanoyl-[ACP] + NADP(+). It catalyses the reaction (3R)-hydroxyoctanoyl-[ACP] = (2E)-octenoyl-[ACP] + H2O. The enzyme catalyses (2E)-octenoyl-[ACP] + NADPH + H(+) = octanoyl-[ACP] + NADP(+). The catalysed reaction is octanoyl-[ACP] + malonyl-[ACP] + H(+) = 3-oxodecanoyl-[ACP] + holo-[ACP] + CO2. It carries out the reaction 3-oxodecanoyl-[ACP] + NADPH + H(+) = (3R)-hydroxydecanoyl-[ACP] + NADP(+). It catalyses the reaction (3R)-hydroxydecanoyl-[ACP] = (2E)-decenoyl-[ACP] + H2O. The enzyme catalyses (2E)-decenoyl-[ACP] + NADPH + H(+) = decanoyl-[ACP] + NADP(+). The catalysed reaction is decanoyl-[ACP] + malonyl-[ACP] + H(+) = 3-oxododecanoyl-[ACP] + holo-[ACP] + CO2. It carries out the reaction 3-oxododecanoyl-[ACP] + NADPH + H(+) = (3R)-hydroxydodecanoyl-[ACP] + NADP(+). It catalyses the reaction (3R)-hydroxydodecanoyl-[ACP] = (2E)-dodecenoyl-[ACP] + H2O. The enzyme catalyses (2E)-dodecenoyl-[ACP] + NADPH + H(+) = dodecanoyl-[ACP] + NADP(+). The catalysed reaction is dodecanoyl-[ACP] + malonyl-[ACP] + H(+) = 3-oxotetradecanoyl-[ACP] + holo-[ACP] + CO2. It carries out the reaction 3-oxotetradecanoyl-[ACP] + NADPH + H(+) = (3R)-hydroxytetradecanoyl-[ACP] + NADP(+). It catalyses the reaction (3R)-hydroxytetradecanoyl-[ACP] = (2E)-tetradecenoyl-[ACP] + H2O. The enzyme catalyses (2E)-tetradecenoyl-[ACP] + NADPH + H(+) = tetradecanoyl-[ACP] + NADP(+). The catalysed reaction is tetradecanoyl-[ACP] + malonyl-[ACP] + H(+) = 3-oxohexadecanoyl-[ACP] + holo-[ACP] + CO2. It carries out the reaction 3-oxohexadecanoyl-[ACP] + NADPH + H(+) = (3R)-hydroxyhexadecanoyl-[ACP] + NADP(+). It catalyses the reaction (3R)-hydroxyhexadecanoyl-[ACP] = (2E)-hexadecenoyl-[ACP] + H2O. The enzyme catalyses (2E)-hexadecenoyl-[ACP] + NADPH + H(+) = hexadecanoyl-[ACP] + NADP(+). The catalysed reaction is hexadecanoyl-[ACP] + malonyl-[ACP] + H(+) = 3-oxooctadecanoyl-[ACP] + holo-[ACP] + CO2. It carries out the reaction 3-oxooctadecanoyl-[ACP] + NADPH + H(+) = (3R)-hydroxyoctadecanoyl-[ACP] + NADP(+). It catalyses the reaction (3R)-hydroxyoctadecanoyl-[ACP] = (2E)-octadecenoyl-[ACP] + H2O. The enzyme catalyses (2E)-octadecenoyl-[ACP] + NADPH + H(+) = octadecanoyl-[ACP] + NADP(+). The catalysed reaction is tetradecanoyl-[ACP] + H2O = tetradecanoate + holo-[ACP] + H(+). It carries out the reaction octadecanoyl-[ACP] + H2O = octadecanoate + holo-[ACP] + H(+). Its pathway is lipid metabolism; fatty acid biosynthesis. Cerulenin, a potent non-competitive pharmacological inhibitor of FAS, binds covalently to the active site of the condensing enzyme region, inactivating a key enzyme step in fatty acid synthesis. Fatty acid synthetase is a multifunctional enzyme that catalyzes the de novo biosynthesis of long-chain saturated fatty acids starting from acetyl-CoA and malonyl-CoA in the presence of NADPH. This multifunctional protein contains 7 catalytic activities and a site for the binding of the prosthetic group 4'-phosphopantetheine of the acyl carrier protein ([ACP]) domain. This is Fatty acid synthase (FASN) from Gallus gallus (Chicken).